Consider the following 205-residue polypeptide: Lymphotoxin-alpha (205 aa).

Positions 1-34 (MTPPERLFLPRVRGTTLHLLLLGLLLVLLPGAQG) are cleaved as a signal peptide. The O-linked (GalNAc...) threonine glycan is linked to Thr41. The THD domain maps to 63–205 (PAAHLIGDPS…STVFFGAFAL (143 aa)). An N-linked (GlcNAc...) asparagine glycan is attached at Asn96.

The protein belongs to the tumor necrosis factor family. In terms of assembly, homotrimer, and heterotrimer of either two LTB and one LTA subunits or (less prevalent) two LTA and one LTB subunits. Interacts with TNFRSF14.

It localises to the secreted. The protein resides in the membrane. In terms of biological role, cytokine that in its homotrimeric form binds to TNFRSF1A/TNFR1, TNFRSF1B/TNFBR and TNFRSF14/HVEM. In its heterotrimeric form with LTB binds to TNFRSF3/LTBR. Lymphotoxin is produced by lymphocytes and is cytotoxic for a wide range of tumor cells in vitro and in vivo. The sequence is that of Lymphotoxin-alpha (LTA) from Pan troglodytes (Chimpanzee).